The following is a 166-amino-acid chain: MQIFIKESTNKKEWFILDLQGHLEYTGDLKNETLGILTKKPNTKDDFSFQIGNSVLVGKRVPLKKPLLVIKKSKLNNNNNSNNNNKMAVDNKDNKDNEKDKEVEYSIEGICNDKIQFTTRPTTFIPQSSVVYGSPTHKSPSSSPKTISPVKVSPTSSPIKNPEFNN.

Positions 73–88 (SKLNNNNNSNNNNKMA) are enriched in low complexity. 2 disordered regions span residues 73 to 101 (SKLN…EKDK) and 126 to 166 (PQSS…EFNN). Residues 89-101 (VDNKDNKDNEKDK) are compositionally biased toward basic and acidic residues. Low complexity predominate over residues 134-154 (SPTHKSPSSSPKTISPVKVSP). Polar residues predominate over residues 155 to 166 (TSSPIKNPEFNN).

This is an uncharacterized protein from Dictyostelium discoideum (Social amoeba).